We begin with the raw amino-acid sequence, 380 residues long: Flagellar P-ring protein (380 aa).

A signal peptide spans 1 to 35; sequence MRFFTQSPFPLRTLTRRLTAFVCVGLLLLPGFTLA.

Belongs to the FlgI family. As to quaternary structure, the basal body constitutes a major portion of the flagellar organelle and consists of four rings (L,P,S, and M) mounted on a central rod.

It localises to the periplasm. It is found in the bacterial flagellum basal body. Assembles around the rod to form the L-ring and probably protects the motor/basal body from shearing forces during rotation. This chain is Flagellar P-ring protein, found in Gluconobacter oxydans (strain 621H) (Gluconobacter suboxydans).